A 135-amino-acid chain; its full sequence is NADPH-dependent 7-cyano-7-deazaguanine reductase (135 aa).

The active-site Thioimide intermediate is Cys-48. Catalysis depends on Asp-55, which acts as the Proton donor. Residues 70-72 (IEL) and 89-90 (HE) each bind substrate.

It belongs to the GTP cyclohydrolase I family. QueF type 1 subfamily.

It localises to the cytoplasm. It carries out the reaction 7-aminomethyl-7-carbaguanine + 2 NADP(+) = 7-cyano-7-deazaguanine + 2 NADPH + 3 H(+). It functions in the pathway tRNA modification; tRNA-queuosine biosynthesis. Its function is as follows. Catalyzes the NADPH-dependent reduction of 7-cyano-7-deazaguanine (preQ0) to 7-aminomethyl-7-deazaguanine (preQ1). This chain is NADPH-dependent 7-cyano-7-deazaguanine reductase, found in Prochlorococcus marinus (strain MIT 9303).